Consider the following 1076-residue polypeptide: Isoleucine--tRNA ligase (1076 aa).

Residues 47–57 (PYTTGQIHLGT) carry the 'HIGH' region motif. The 'KMSKS' region motif lies at 591–595 (KMSKS). Lys-594 contributes to the ATP binding site.

The protein belongs to the class-I aminoacyl-tRNA synthetase family. IleS type 2 subfamily. In terms of assembly, monomer. The cofactor is Zn(2+).

It is found in the cytoplasm. The catalysed reaction is tRNA(Ile) + L-isoleucine + ATP = L-isoleucyl-tRNA(Ile) + AMP + diphosphate. Catalyzes the attachment of isoleucine to tRNA(Ile). As IleRS can inadvertently accommodate and process structurally similar amino acids such as valine, to avoid such errors it has two additional distinct tRNA(Ile)-dependent editing activities. One activity is designated as 'pretransfer' editing and involves the hydrolysis of activated Val-AMP. The other activity is designated 'posttransfer' editing and involves deacylation of mischarged Val-tRNA(Ile). This is Isoleucine--tRNA ligase from Methanoregula boonei (strain DSM 21154 / JCM 14090 / 6A8).